Reading from the N-terminus, the 346-residue chain is NADP-dependent alcohol dehydrogenase C (346 aa).

Zn(2+) contacts are provided by C41, H63, C94, C97, C100, C108, and C158.

Belongs to the zinc-containing alcohol dehydrogenase family. Zn(2+) serves as cofactor.

The catalysed reaction is a primary alcohol + NADP(+) = an aldehyde + NADPH + H(+). The sequence is that of NADP-dependent alcohol dehydrogenase C (adhC) from Mycobacterium bovis (strain ATCC BAA-935 / AF2122/97).